We begin with the raw amino-acid sequence, 831 residues long: Glycerol-3-phosphate acyltransferase (831 aa).

The HXXXXD motif motif lies at 304-309; sequence CHRSHM. The tract at residues 801 to 831 is disordered; that stretch reads VSMPAETSNQPEAPETPETPETPEPEGKTES.

The protein belongs to the GPAT/DAPAT family.

It is found in the cell inner membrane. The catalysed reaction is sn-glycerol 3-phosphate + an acyl-CoA = a 1-acyl-sn-glycero-3-phosphate + CoA. It functions in the pathway phospholipid metabolism; CDP-diacylglycerol biosynthesis; CDP-diacylglycerol from sn-glycerol 3-phosphate: step 1/3. This Yersinia pseudotuberculosis serotype IB (strain PB1/+) protein is Glycerol-3-phosphate acyltransferase.